The chain runs to 313 residues: Ribosomal RNA small subunit methyltransferase H (313 aa).

S-adenosyl-L-methionine contacts are provided by residues 35 to 37 (GGH), D55, F81, D103, and Q110.

Belongs to the methyltransferase superfamily. RsmH family.

It is found in the cytoplasm. It catalyses the reaction cytidine(1402) in 16S rRNA + S-adenosyl-L-methionine = N(4)-methylcytidine(1402) in 16S rRNA + S-adenosyl-L-homocysteine + H(+). Functionally, specifically methylates the N4 position of cytidine in position 1402 (C1402) of 16S rRNA. In Pseudomonas aeruginosa (strain UCBPP-PA14), this protein is Ribosomal RNA small subunit methyltransferase H.